Reading from the N-terminus, the 346-residue chain is Uroporphyrinogen decarboxylase (346 aa).

Residues 21–25, Asp71, Tyr146, Ser201, and His316 contribute to the substrate site; that span reads RQAGR.

The protein belongs to the uroporphyrinogen decarboxylase family. As to quaternary structure, homodimer.

It localises to the cytoplasm. It carries out the reaction uroporphyrinogen III + 4 H(+) = coproporphyrinogen III + 4 CO2. It participates in porphyrin-containing compound metabolism; protoporphyrin-IX biosynthesis; coproporphyrinogen-III from 5-aminolevulinate: step 4/4. In terms of biological role, catalyzes the decarboxylation of four acetate groups of uroporphyrinogen-III to yield coproporphyrinogen-III. This Rickettsia africae (strain ESF-5) protein is Uroporphyrinogen decarboxylase.